Consider the following 262-residue polypeptide: Adenosylcobinamide-GDP ribazoletransferase (262 aa).

The next 6 membrane-spanning stretches (helical) occupy residues 43–63, 66–86, 120–140, 146–166, 191–211, and 242–262; these read YFGL…WLTQ, LPAG…TGGF, GALA…ELAL, AGSA…SIIF, LLIL…LAAL, and AAQQ…GNIL.

Belongs to the CobS family. Mg(2+) serves as cofactor.

The protein resides in the cell inner membrane. The enzyme catalyses alpha-ribazole + adenosylcob(III)inamide-GDP = adenosylcob(III)alamin + GMP + H(+). It catalyses the reaction alpha-ribazole 5'-phosphate + adenosylcob(III)inamide-GDP = adenosylcob(III)alamin 5'-phosphate + GMP + H(+). It participates in cofactor biosynthesis; adenosylcobalamin biosynthesis; adenosylcobalamin from cob(II)yrinate a,c-diamide: step 7/7. Functionally, joins adenosylcobinamide-GDP and alpha-ribazole to generate adenosylcobalamin (Ado-cobalamin). Also synthesizes adenosylcobalamin 5'-phosphate from adenosylcobinamide-GDP and alpha-ribazole 5'-phosphate. This is Adenosylcobinamide-GDP ribazoletransferase from Shewanella baltica (strain OS155 / ATCC BAA-1091).